We begin with the raw amino-acid sequence, 331 residues long: Glycerol-3-phosphate dehydrogenase [NAD(P)+] (331 aa).

Positions 14, 34, and 107 each coordinate NADPH. 3 residues coordinate sn-glycerol 3-phosphate: lysine 107, glycine 135, and serine 137. Residue alanine 139 coordinates NADPH. Residues lysine 190, aspartate 243, serine 253, arginine 254, and asparagine 255 each contribute to the sn-glycerol 3-phosphate site. Residue lysine 190 is the Proton acceptor of the active site. Residue arginine 254 participates in NADPH binding. The NADPH site is built by valine 278 and glutamate 280.

Belongs to the NAD-dependent glycerol-3-phosphate dehydrogenase family.

It is found in the cytoplasm. The catalysed reaction is sn-glycerol 3-phosphate + NAD(+) = dihydroxyacetone phosphate + NADH + H(+). The enzyme catalyses sn-glycerol 3-phosphate + NADP(+) = dihydroxyacetone phosphate + NADPH + H(+). It participates in membrane lipid metabolism; glycerophospholipid metabolism. Its function is as follows. Catalyzes the reduction of the glycolytic intermediate dihydroxyacetone phosphate (DHAP) to sn-glycerol 3-phosphate (G3P), the key precursor for phospholipid synthesis. The polypeptide is Glycerol-3-phosphate dehydrogenase [NAD(P)+] (Caulobacter vibrioides (strain ATCC 19089 / CIP 103742 / CB 15) (Caulobacter crescentus)).